Here is a 247-residue protein sequence, read N- to C-terminus: ATP synthase subunit a, chloroplastic (247 aa).

The next 5 membrane-spanning stretches (helical) occupy residues 38–58 (QVLI…ILVV), 95–115 (VPFI…GALL), 134–154 (INTT…AGIS), 199–219 (LVVV…VMFL), and 220–240 (GLFT…AYIG).

The protein belongs to the ATPase A chain family. As to quaternary structure, F-type ATPases have 2 components, CF(1) - the catalytic core - and CF(0) - the membrane proton channel. CF(1) has five subunits: alpha(3), beta(3), gamma(1), delta(1), epsilon(1). CF(0) has four main subunits: a, b, b' and c.

It is found in the plastid. Its subcellular location is the chloroplast thylakoid membrane. Key component of the proton channel; it plays a direct role in the translocation of protons across the membrane. The sequence is that of ATP synthase subunit a, chloroplastic from Pisum sativum (Garden pea).